Here is a 298-residue protein sequence, read N- to C-terminus: MTRTDGDTWDLATSVGSTATGVAAMRALATRQPDPLIDDPYADALVKAVGLEHCIALADGETCVEGDPMLDLNRMCEQIAVRTRYFDELFIAAGADGVRQAVILASGLDTRAYRLDWPAGTVVFEVDQPQVIEFKTRTLADLGAQPTAERRTVAVDLRDDWPAALRDAGFDPAEPTAWIAEGLLIYLPAEAQDRLLDNITALSAPGSRLATEHMDHRILAEGAGKRIGEWSRRVGSSLDIADLFYTGERNTAGDYLRGLGWQVTVRPSKEAYADHGFELPEEMAELSGDSGYLSAHLK.

Residues D127 and 156 to 157 (DL) each bind S-adenosyl-L-methionine.

The protein belongs to the UPF0677 family.

Its function is as follows. Exhibits S-adenosyl-L-methionine-dependent methyltransferase activity. The chain is Putative S-adenosyl-L-methionine-dependent methyltransferase MSMEG_1480/MSMEI_1444 from Mycolicibacterium smegmatis (strain ATCC 700084 / mc(2)155) (Mycobacterium smegmatis).